We begin with the raw amino-acid sequence, 199 residues long: NAD(P)H dehydrogenase (quinone) (199 aa).

Positions 4–190 constitute a Flavodoxin-like domain; it reads VLVLYYSAYG…EAAKYQGAHV (187 aa). FMN contacts are provided by residues 10–15 and 78–80; these read SAYGHI and TRF. An NAD(+)-binding site is contributed by Y12. W98 serves as a coordination point for substrate. FMN-binding positions include 113–119 and H134; that span reads SSATQHG.

This sequence belongs to the WrbA family. The cofactor is FMN.

The enzyme catalyses a quinone + NADH + H(+) = a quinol + NAD(+). The catalysed reaction is a quinone + NADPH + H(+) = a quinol + NADP(+). The chain is NAD(P)H dehydrogenase (quinone) from Rhizobium rhizogenes (strain K84 / ATCC BAA-868) (Agrobacterium radiobacter).